Here is a 509-residue protein sequence, read N- to C-terminus: MQQDYCPDIAKLAEGGFNKVFILRAKNGREVIARIPTPIAGPAHYTTASEVATMDFLRAVLKLPVPEVFAYSTTSENPVGAEYILMERVEGESLSSRWLSLTTDEVKDIMIQIAEMERKIFDFRFPAYGSLYHKKDLDWKHQIPIVEDFVIGPVSSREFWHGERSKTEIDRGPCRVSPLSTFPFILGFLEKEPTGTGLIIAVGLSPLDCVTSAARREMAVIQRHAKPQPRQTFLLPTNYNIHPSEHTSLLSQFLQVAPHLIRPGSYSAPTLRHPDLSLSNILLAPGTSKIISIIDWQGATILPRFMQAGYPAFCHHDSSQPQSLEIPSLPDDFDKMGIDEQRQIKAIFRLEEANLYYTAATGVHNEEHMNVLKIPHLGMQQYLLRQTGYPWDADVINLRAALVGITTPSVWSKISSAACPVEFSEEEREAAIAESQEWNESEQLLSRVREHLNIDLEGGTEPDNFERAVEGNRQLRIEMVRQAEAGQQEICWRNWPYKDQEDNSMPPQR.

Its function is as follows. Part of the subtelomeric hrmA-associated cluster (HAC) containing genes that alter the hyphal surface (such as reduced total chitin or increased beta-glucan exposure) and perturb inter-hyphal interactions within the developing biofilms, resulting in a loss of vertically aligned polarized growing filaments. Consequently, this hypoxia-typic morphotype (called H-MORPH) with altered biofilm architecture leads to increased hypoxia fitness, increased host inflammation, rapid disease progression, and mortality in a murine model of invasive aspergillosis. The polypeptide is Subtelomeric hrmA-associated cluster protein AFUB_078990 (Aspergillus fumigatus (strain CBS 144.89 / FGSC A1163 / CEA10) (Neosartorya fumigata)).